The sequence spans 1325 residues: Cyclic nucleotide-gated channel beta-1 (1325 aa).

Disordered regions lie at residues Met-1 to Val-124, Pro-147 to Leu-198, Ala-227 to Pro-279, Trp-340 to Cys-470, Leu-482 to Ser-637, and Lys-659 to Ala-694. Residues Met-1–Tyr-732 lie on the Cytoplasmic side of the membrane. Residues Pro-43–Pro-81 show a composition bias toward acidic residues. Residues Leu-105–Gln-121 show a composition bias toward polar residues. A compositionally biased stretch (basic and acidic residues) spans Ile-370–Glu-379. Acidic residues-rich tracts occupy residues Glu-380–Glu-393, Glu-418–Pro-463, and Leu-495–Lys-517. Basic and acidic residues predominate over residues Glu-518–Gly-527. Residues Thr-560 to Pro-571 are compositionally biased toward pro residues. The tract at residues Ala-633 to Arg-643 is calmodulin-binding CaM1. Residues Ile-733–Trp-754 form a helical membrane-spanning segment. At Ala-755 to Asn-763 the chain is on the extracellular side. A helical transmembrane segment spans residues Ile-764–Phe-785. At Gln-786–Asp-800 the chain is on the cytoplasmic side. Residues Lys-801 to Cys-820 form a helical membrane-spanning segment. The Extracellular segment spans residues Leu-821–Leu-836. The helical transmembrane segment at Leu-837 to Phe-849 threads the bilayer. Residues Glu-850–Lys-861 lie on the Cytoplasmic side of the membrane. A helical membrane pass occupies residues Ala-862–Leu-884. Positions Ala-862–Ala-961 are ion conduction pathway. Topologically, residues Tyr-885–Ser-907 are extracellular. Transmembrane regions (helical) follow at residues Tyr-908 to Ile-934 and Val-935 to Gly-960. The Cytoplasmic segment spans residues Ala-961–Glu-1325. The C-linker stretch occupies residues Ala-964–Gln-1040. The cNMP-binding domain stretch occupies residues Leu-1038–Leu-1142. Positions Arg-1044 to Leu-1160 are cyclic nucleotide-binding domain. 5 residues coordinate 3',5'-cyclic GMP: Gly-1105, Glu-1106, Ser-1108, Arg-1118, and Thr-1119. Arg-1118 serves as a coordination point for 3',5'-cyclic AMP. Positions Gln-1224–Gln-1230 are calmodulin-binding CaM2. The segment covering Gln-1226 to Ala-1250 has biased composition (low complexity). The tract at residues Gln-1226–Glu-1325 is disordered. The span at Lys-1262–Ser-1279 shows a compositional bias: pro residues.

This sequence belongs to the cyclic nucleotide-gated cation channel (TC 1.A.1.5) family. CNGB1 subfamily. Rod outer segments. Olfactory sensory neurons.

The protein resides in the cell projection. Its subcellular location is the cilium membrane. It carries out the reaction Ca(2+)(in) = Ca(2+)(out). It catalyses the reaction Na(+)(in) = Na(+)(out). The enzyme catalyses K(+)(in) = K(+)(out). The catalysed reaction is NH4(+)(in) = NH4(+)(out). It carries out the reaction Rb(+)(in) = Rb(+)(out). It catalyses the reaction Li(+)(in) = Li(+)(out). The enzyme catalyses Cs(+)(in) = Cs(+)(out). Functionally, pore-forming subunit of the rod cyclic nucleotide-gated channel. Mediates rod photoresponses at dim light converting transient changes in intracellular cGMP levels into electrical signals. In the dark, cGMP levels are high and keep the channel open enabling a steady inward current carried by Na(+) and Ca(2+) ions that leads to membrane depolarization and neurotransmitter release from synaptic terminals. Upon photon absorption cGMP levels decline leading to channel closure and membrane hyperpolarization that ultimately slows neurotransmitter release and signals the presence of light, the end point of the phototransduction cascade. Pore-forming subunit of the olfactory cyclic nucleotide-gated channel. Operates in the cilia of olfactory sensory neurons where chemical stimulation of the odorant is converted to an electrical signal. Mediates odorant-induced cAMP-dependent Ca(2+) influx triggering neuron depolarization. The rise of intracellular Ca(2+) levels potentiates the olfactory response by activating Ca(2+)-dependent Cl(-) channels, but it also serves as a negative feedback signal to desensitize the channel for rapid adaptation to odorants. Conducts cGMP- and cAMP-gated ion currents, with permeability for monovalent and divalent cations. The selectivity for Ca(2+) over Na(+) increases with cGMP concentrations, whereas the selectivity among monovalent ions is independent of the cGMP levels. The protein is Cyclic nucleotide-gated channel beta-1 of Mus musculus (Mouse).